The sequence spans 59 residues: UPF0434 protein SO_2800 (59 aa).

The protein belongs to the UPF0434 family.

The polypeptide is UPF0434 protein SO_2800 (Shewanella oneidensis (strain ATCC 700550 / JCM 31522 / CIP 106686 / LMG 19005 / NCIMB 14063 / MR-1)).